The chain runs to 78 residues: Large ribosomal subunit protein bL28 (78 aa).

Belongs to the bacterial ribosomal protein bL28 family.

The protein is Large ribosomal subunit protein bL28 of Marinobacter nauticus (strain ATCC 700491 / DSM 11845 / VT8) (Marinobacter aquaeolei).